The chain runs to 226 residues: UPF0319 protein SO_1816 (226 aa).

An N-terminal signal peptide occupies residues 1–21 (MKSLLPISSLLVLLGSASVSA).

The protein belongs to the UPF0319 family.

The chain is UPF0319 protein SO_1816 from Shewanella oneidensis (strain ATCC 700550 / JCM 31522 / CIP 106686 / LMG 19005 / NCIMB 14063 / MR-1).